A 268-amino-acid polypeptide reads, in one-letter code: Undecaprenyl-diphosphatase (268 aa).

Transmembrane regions (helical) follow at residues 11–33 (FLGL…LLLI), 46–66 (FEVL…SAKL), 84–104 (LGVL…HGFI), 107–127 (VLFE…FILL), 144–164 (YPLP…IPGV), 185–205 (AEFS…YDLF), 213–233 (FNDG…GVFV), and 246–266 (FALF…ALII).

The protein belongs to the UppP family.

The protein resides in the cell inner membrane. The enzyme catalyses di-trans,octa-cis-undecaprenyl diphosphate + H2O = di-trans,octa-cis-undecaprenyl phosphate + phosphate + H(+). Catalyzes the dephosphorylation of undecaprenyl diphosphate (UPP). Confers resistance to bacitracin. The protein is Undecaprenyl-diphosphatase of Brucella suis (strain ATCC 23445 / NCTC 10510).